We begin with the raw amino-acid sequence, 557 residues long: CDP-diacylglycerol--glycerol-3-phosphate 3-phosphatidyltransferase, mitochondrial (557 aa).

Residues 1–25 constitute a mitochondrion transit peptide; sequence MAAAGGAALWRRLAAWLPRGPPGLA. 121–128 provides a ligand contact to ATP; sequence ASLYLGTG. Residues 212-238 enclose the PLD phosphodiesterase 1 domain; sequence TIGLQHIKVYLFDDNVILSGANLSDLY. Active-site residues include histidine 217, lysine 219, and aspartate 224. Residues 322–346 form a disordered region; that stretch reads TFHSSQQGSSMLPQHDSEASEGLKP. Positions 323–333 are enriched in polar residues; the sequence is FHSSQQGSSML. The segment covering 336–346 has biased composition (basic and acidic residues); it reads HDSEASEGLKP. A PLD phosphodiesterase 2 domain is found at 461 to 494; the sequence is AGWTFHAKGLWLYLAGSSLPCLTLIGSPNFGYRS.

It belongs to the CDP-alcohol phosphatidyltransferase class-II family.

The protein resides in the mitochondrion. It catalyses the reaction a CDP-1,2-diacyl-sn-glycerol + sn-glycerol 3-phosphate = a 1,2-diacyl-sn-glycero-3-phospho-(1'-sn-glycero-3'-phosphate) + CMP + H(+). The protein operates within phospholipid metabolism; phosphatidylglycerol biosynthesis; phosphatidylglycerol from CDP-diacylglycerol: step 1/2. Activated by calcium and magnesium and inhibited by other bivalent cations. Functions in the biosynthesis of the anionic phospholipids phosphatidylglycerol and cardiolipin. The sequence is that of CDP-diacylglycerol--glycerol-3-phosphate 3-phosphatidyltransferase, mitochondrial (PGS1) from Gallus gallus (Chicken).